A 99-amino-acid polypeptide reads, in one-letter code: NADH-quinone oxidoreductase subunit K (99 aa).

3 helical membrane-spanning segments follow: residues 3–23, 28–48, and 59–79; these read PDNY…GVLL, IVVF…FVAF, and VVAF…LAII.

The protein belongs to the complex I subunit 4L family. NDH-1 is composed of 14 different subunits. Subunits NuoA, H, J, K, L, M, N constitute the membrane sector of the complex.

It localises to the cell membrane. It carries out the reaction a quinone + NADH + 5 H(+)(in) = a quinol + NAD(+) + 4 H(+)(out). In terms of biological role, NDH-1 shuttles electrons from NADH, via FMN and iron-sulfur (Fe-S) centers, to quinones in the respiratory chain. The immediate electron acceptor for the enzyme in this species is believed to be a menaquinone. Couples the redox reaction to proton translocation (for every two electrons transferred, four hydrogen ions are translocated across the cytoplasmic membrane), and thus conserves the redox energy in a proton gradient. This is NADH-quinone oxidoreductase subunit K from Mycobacterium sp. (strain KMS).